A 122-amino-acid polypeptide reads, in one-letter code: Large ribosomal subunit protein uL14 (122 aa).

Belongs to the universal ribosomal protein uL14 family. In terms of assembly, part of the 50S ribosomal subunit. Forms a cluster with proteins L3 and L19. In the 70S ribosome, L14 and L19 interact and together make contacts with the 16S rRNA in bridges B5 and B8.

Binds to 23S rRNA. Forms part of two intersubunit bridges in the 70S ribosome. This chain is Large ribosomal subunit protein uL14, found in Pseudomonas savastanoi pv. phaseolicola (strain 1448A / Race 6) (Pseudomonas syringae pv. phaseolicola (strain 1448A / Race 6)).